Reading from the N-terminus, the 122-residue chain is Small ribosomal subunit protein uS13 (122 aa).

Residues 94-122 are disordered; it reads RGLPVRGQKTKTNARTRKGPRKTVAGKRK.

This sequence belongs to the universal ribosomal protein uS13 family. As to quaternary structure, part of the 30S ribosomal subunit. Forms a loose heterodimer with protein S19. Forms two bridges to the 50S subunit in the 70S ribosome.

Its function is as follows. Located at the top of the head of the 30S subunit, it contacts several helices of the 16S rRNA. In the 70S ribosome it contacts the 23S rRNA (bridge B1a) and protein L5 of the 50S subunit (bridge B1b), connecting the 2 subunits; these bridges are implicated in subunit movement. Contacts the tRNAs in the A and P-sites. The sequence is that of Small ribosomal subunit protein uS13 from Syntrophotalea carbinolica (strain DSM 2380 / NBRC 103641 / GraBd1) (Pelobacter carbinolicus).